The primary structure comprises 90 residues: Probable Fe(2+)-trafficking protein (90 aa).

This sequence belongs to the Fe(2+)-trafficking protein family.

In terms of biological role, could be a mediator in iron transactions between iron acquisition and iron-requiring processes, such as synthesis and/or repair of Fe-S clusters in biosynthetic enzymes. The polypeptide is Probable Fe(2+)-trafficking protein (Herminiimonas arsenicoxydans).